A 557-amino-acid polypeptide reads, in one-letter code: Glucose-6-phosphate isomerase (557 aa).

Glutamate 361 acts as the Proton donor in catalysis. Active-site residues include histidine 392 and lysine 520.

Belongs to the GPI family.

The protein resides in the cytoplasm. The enzyme catalyses alpha-D-glucose 6-phosphate = beta-D-fructose 6-phosphate. It participates in carbohydrate biosynthesis; gluconeogenesis. The protein operates within carbohydrate degradation; glycolysis; D-glyceraldehyde 3-phosphate and glycerone phosphate from D-glucose: step 2/4. Functionally, catalyzes the reversible isomerization of glucose-6-phosphate to fructose-6-phosphate. This chain is Glucose-6-phosphate isomerase, found in Acinetobacter venetianus (strain ATCC 31012 / DSM 23050 / BCRC 14357 / CCUG 45561 / CIP 110063 / KCTC 2702 / LMG 19082 / RAG-1).